The chain runs to 641 residues: Frizzled-1 (641 aa).

The signal sequence occupies residues 1–68 (MAEEAVPSES…WLLEAPLLLG (68 aa)). Over 69–316 (VRAQPAGQVS…PEELRFSRTW (248 aa)) the chain is Extracellular. The disordered stretch occupies residues 74 to 99 (AGQVSGPGQQRPPPPQPQQGGQQYNG). An FZ domain is found at 106–224 (PDHGYCQPIS…HGAGELCVGQ (119 aa)). Cystine bridges form between Cys111–Cys172, Cys119–Cys165, Cys156–Cys192, Cys182–Cys221, and Cys186–Cys209. N-linked (GlcNAc...) asparagine glycosylation occurs at Asn125. Residue Asn225 is glycosylated (N-linked (GlcNAc...) asparagine). The helical transmembrane segment at 317 to 337 (IGIWSVLCCASTLFTVLTYLV) threads the bilayer. At 338–348 (DMRRFSYPERP) the chain is on the cytoplasmic side. Residues 349 to 369 (IIFLSGCYTAVAVAYIAGFLL) form a helical membrane-spanning segment. The Extracellular portion of the chain corresponds to 370-396 (EDRVVCNDKFAEDGARTVAQGTKKEGC). The chain crosses the membrane as a helical span at residues 397-417 (TILFMMLYFFSMASSIWWVIL). At 418 to 439 (SLTWFLAAGMKWGHEAIEANSQ) the chain is on the cytoplasmic side. Residues 440–460 (YFHLAAWAVPAIKTITILALG) traverse the membrane as a helical segment. At 461-483 (QVDGDVLSGVCFVGLNNVDALRG) the chain is on the extracellular side. The helical transmembrane segment at 484–504 (FVLAPLFVYLFIGTSFLLAGF) threads the bilayer. The Cytoplasmic portion of the chain corresponds to 505-530 (VSLFRIRTIMKHDGTKTEKLEKLMVR). The chain crosses the membrane as a helical span at residues 531–551 (IGVFSVLYTVPATIVIACYFY). Topologically, residues 552-595 (EQAFRDQWERSWVAQSCKSYAIPCPHLQGGGGVPPHPPMSPDFT) are extracellular. The helical transmembrane segment at 596-616 (VFMIKYLMTLIVGITSGFWIW) threads the bilayer. Over 617 to 641 (SGKTLNSWRKFYTRLTNSKQGETTV) the chain is Cytoplasmic. The Lys-Thr-X-X-X-Trp motif, mediates interaction with the PDZ domain of Dvl family members motif lies at 619-624 (KTLNSW). The PDZ-binding signature appears at 639 to 641 (TTV).

It belongs to the G-protein coupled receptor Fz/Smo family. In terms of assembly, interacts with MYOC. Interacts with WNT7B. Ubiquitinated by ZNRF3, leading to its degradation by the proteasome. Widely expressed. Most abundant in kidney, liver, uterus, ovary and heart. Lower levels seen in brain and intestine. Extremely low in calvaria, mammary glands and testis.

It localises to the cell membrane. Its function is as follows. Receptor for Wnt proteins. Activated by WNT3A, WNT3, WNT1 and to a lesser extent WNT2, but apparently not by WNT4, WNT5A, WNT5B, WNT6 or WNT7A. Contradictory results have been reported for activation by WNT7B. Functions in the canonical Wnt/beta-catenin signaling pathway. The canonical Wnt/beta-catenin signaling pathway leads to the activation of disheveled proteins, inhibition of GSK-3 kinase, nuclear accumulation of beta-catenin and activation of Wnt target genes. A second signaling pathway involving PKC and calcium fluxes has been seen for some family members, but it is not yet clear if it represents a distinct pathway or if it can be integrated in the canonical pathway, as PKC seems to be required for Wnt-mediated inactivation of GSK-3 kinase. Both pathways seem to involve interactions with G-proteins. May be involved in transduction and intercellular transmission of polarity information during tissue morphogenesis and/or in differentiated tissues. This Rattus norvegicus (Rat) protein is Frizzled-1 (Fzd1).